The primary structure comprises 61 residues: Small ribosomal subunit protein uS14 (61 aa).

The Zn(2+) site is built by Cys24, Cys27, Cys40, and Cys43.

It belongs to the universal ribosomal protein uS14 family. Zinc-binding uS14 subfamily. Part of the 30S ribosomal subunit. Contacts proteins S3 and S10. Zn(2+) is required as a cofactor.

In terms of biological role, binds 16S rRNA, required for the assembly of 30S particles and may also be responsible for determining the conformation of the 16S rRNA at the A site. This is Small ribosomal subunit protein uS14 from Treponema pallidum (strain Nichols).